We begin with the raw amino-acid sequence, 114 residues long: Ig kappa chain V-I region S107A (114 aa).

The interval 1–23 is framework-1; that stretch reads DIVMTQSPTFLAVTASKKVTISC. A disulfide bridge connects residues cysteine 23 and cysteine 94. Residues 24 to 40 are complementarity-determining-1; it reads TASESLYSSKHKVHYLA. The tract at residues 41 to 55 is framework-2; sequence WYQKKPEQSPKLLIY. Positions 56–62 are complementarity-determining-2; sequence GASNRYI. Residues 63–94 are framework-3; that stretch reads GVPDRFTGSGSGTDFTLTISSVQVEDLTHYYC. Residues 95–103 form a complementarity-determining-3 region; the sequence is AQFYSYPLT. The tract at residues 104-113 is framework-4; it reads FGAGTKLELK.

Anti-phosphocholine antibody. The sequence is that of Ig kappa chain V-I region S107A (Igkv7-33) from Mus musculus (Mouse).